The chain runs to 834 residues: Periplasmic nitrate reductase (834 aa).

The segment at residues 1–31 (MTGELTRREMLKAHAAGIAAATAGIALPAAA) is a signal peptide (tat-type signal). The 57-residue stretch at 43–99 (ITWSKAPCRFCGTGCGVMVGVKEGQVVATHGDMQAEVNRGLNCIKGYFLSKIMYGTD) folds into the 4Fe-4S Mo/W bis-MGD-type domain. [4Fe-4S] cluster is bound by residues Cys50, Cys53, Cys57, and Cys85. Mo-bis(molybdopterin guanine dinucleotide) is bound by residues Lys87, Gln154, Asn179, Cys183, 216-223 (WGSNMAEM), 247-251 (STFTH), 266-268 (GTD), Met377, Gln381, Asn487, 513-514 (SD), Lys536, Asp563, and 723-732 (TGRVLEHWHS). Substrate is bound at residue Trp799. Positions 807 and 824 each coordinate Mo-bis(molybdopterin guanine dinucleotide).

This sequence belongs to the prokaryotic molybdopterin-containing oxidoreductase family. NasA/NapA/NarB subfamily. In terms of assembly, component of the periplasmic nitrate reductase NapAB complex composed of NapA and NapB. It depends on [4Fe-4S] cluster as a cofactor. Requires Mo-bis(molybdopterin guanine dinucleotide) as cofactor. Post-translationally, predicted to be exported by the Tat system. The position of the signal peptide cleavage has not been experimentally proven.

Its subcellular location is the periplasm. It catalyses the reaction 2 Fe(II)-[cytochrome] + nitrate + 2 H(+) = 2 Fe(III)-[cytochrome] + nitrite + H2O. Its function is as follows. Catalytic subunit of the periplasmic nitrate reductase complex NapAB. Receives electrons from NapB and catalyzes the reduction of nitrate to nitrite. The polypeptide is Periplasmic nitrate reductase (Rhizobium meliloti (strain 1021) (Ensifer meliloti)).